Here is a 188-residue protein sequence, read N- to C-terminus: Elongation factor P (188 aa).

It belongs to the elongation factor P family.

It is found in the cytoplasm. It functions in the pathway protein biosynthesis; polypeptide chain elongation. Involved in peptide bond synthesis. Stimulates efficient translation and peptide-bond synthesis on native or reconstituted 70S ribosomes in vitro. Probably functions indirectly by altering the affinity of the ribosome for aminoacyl-tRNA, thus increasing their reactivity as acceptors for peptidyl transferase. The sequence is that of Elongation factor P from Rickettsia akari (strain Hartford).